Consider the following 527-residue polypeptide: Peptide chain release factor 3 (527 aa).

In terms of domain architecture, tr-type G spans 9 to 278; that stretch reads NKRRTFAIIS…GLTQWAPKPQ (270 aa). GTP-binding positions include 18–25, 86–90, and 140–143; these read SHPDAGKT, DTPGH, and NKLD.

It belongs to the TRAFAC class translation factor GTPase superfamily. Classic translation factor GTPase family. PrfC subfamily.

The protein resides in the cytoplasm. Increases the formation of ribosomal termination complexes and stimulates activities of RF-1 and RF-2. It binds guanine nucleotides and has strong preference for UGA stop codons. It may interact directly with the ribosome. The stimulation of RF-1 and RF-2 is significantly reduced by GTP and GDP, but not by GMP. The chain is Peptide chain release factor 3 (prfC) from Haemophilus influenzae (strain ATCC 51907 / DSM 11121 / KW20 / Rd).